Reading from the N-terminus, the 82-residue chain is UPF0153 protein VC_1057 (82 aa).

This sequence belongs to the UPF0153 family.

This Vibrio cholerae serotype O1 (strain ATCC 39315 / El Tor Inaba N16961) protein is UPF0153 protein VC_1057.